Consider the following 178-residue polypeptide: Crossover junction endodeoxyribonuclease RuvC (178 aa).

Residues aspartate 21, glutamate 81, and histidine 154 contribute to the active site. Mg(2+) contacts are provided by aspartate 21, glutamate 81, and histidine 154.

It belongs to the RuvC family. Homodimer which binds Holliday junction (HJ) DNA. The HJ becomes 2-fold symmetrical on binding to RuvC with unstacked arms; it has a different conformation from HJ DNA in complex with RuvA. In the full resolvosome a probable DNA-RuvA(4)-RuvB(12)-RuvC(2) complex forms which resolves the HJ. It depends on Mg(2+) as a cofactor.

It localises to the cytoplasm. It carries out the reaction Endonucleolytic cleavage at a junction such as a reciprocal single-stranded crossover between two homologous DNA duplexes (Holliday junction).. Functionally, the RuvA-RuvB-RuvC complex processes Holliday junction (HJ) DNA during genetic recombination and DNA repair. Endonuclease that resolves HJ intermediates. Cleaves cruciform DNA by making single-stranded nicks across the HJ at symmetrical positions within the homologous arms, yielding a 5'-phosphate and a 3'-hydroxyl group; requires a central core of homology in the junction. The consensus cleavage sequence is 5'-(A/T)TT(C/G)-3'. Cleavage occurs on the 3'-side of the TT dinucleotide at the point of strand exchange. HJ branch migration catalyzed by RuvA-RuvB allows RuvC to scan DNA until it finds its consensus sequence, where it cleaves and resolves the cruciform DNA. In Treponema denticola (strain ATCC 35405 / DSM 14222 / CIP 103919 / JCM 8153 / KCTC 15104), this protein is Crossover junction endodeoxyribonuclease RuvC.